Here is a 130-residue protein sequence, read N- to C-terminus: Small ribosomal subunit protein uS11 (130 aa).

This sequence belongs to the universal ribosomal protein uS11 family. Part of the 30S ribosomal subunit. Interacts with proteins S7 and S18. Binds to IF-3.

In terms of biological role, located on the platform of the 30S subunit, it bridges several disparate RNA helices of the 16S rRNA. Forms part of the Shine-Dalgarno cleft in the 70S ribosome. In Phytoplasma mali (strain AT), this protein is Small ribosomal subunit protein uS11.